Reading from the N-terminus, the 160-residue chain is Transcriptional repressor NrdR (160 aa).

Residues 1 to 11 are compositionally biased toward polar residues; it reads MRCPNCNSLDT. Residues 1 to 20 are disordered; sequence MRCPNCNSLDTQVKDSRPTE. A zinc finger lies at 3 to 34; that stretch reads CPNCNSLDTQVKDSRPTEDSSVIRRRRVCIAC. In terms of domain architecture, ATP-cone spans 49–139; it reads LIVIKRNGRR…VYRNFREAKD (91 aa).

It belongs to the NrdR family. Zn(2+) is required as a cofactor.

Its function is as follows. Negatively regulates transcription of bacterial ribonucleotide reductase nrd genes and operons by binding to NrdR-boxes. This is Transcriptional repressor NrdR from Rhodopseudomonas palustris (strain ATCC BAA-98 / CGA009).